The primary structure comprises 377 residues: Probable protein phosphatase 2C 61 (377 aa).

The region spanning 30–338 (AAGEFSMAAA…DDITAVVVFL (309 aa)) is the PPM-type phosphatase domain. Residues D64, G65, D269, and D329 each contribute to the Mn(2+) site.

This sequence belongs to the PP2C family. It depends on Mg(2+) as a cofactor. Mn(2+) serves as cofactor.

The catalysed reaction is O-phospho-L-seryl-[protein] + H2O = L-seryl-[protein] + phosphate. It catalyses the reaction O-phospho-L-threonyl-[protein] + H2O = L-threonyl-[protein] + phosphate. The sequence is that of Probable protein phosphatase 2C 61 from Oryza sativa subsp. japonica (Rice).